Here is a 423-residue protein sequence, read N- to C-terminus: MQDIKQRDIEHVILVGCQVNREDEEFEQSIAELESLAKTAKGKVVGTITQKREKVESSTYVGKGKVQELVHLIEETEADLVIFNDELQASQMRNLHAECGIAVIDRTQLILDIFASRAKSREGKLQVELAQLKYLLPRLSGQGLALSRQGGGIGTRGPGETQLETDRRHIRRRMNEIERQLEAVVNHRVRYREKRKKNAAIQLALVGYTNAGKSTLLNRLTKADTLEEDQLFATLDPTTRQLHLPSGFSVLMSDTVGFIQDLPTTLVASFRSTLEELKEADLLLHVVDCSHPDYEQHERTVIKLIEELEAHSIPQLLIYNKADQKTDVFIPTHTKDSIIMSAYNEEDLLALKVKIEQALKGMMMPYRSIIKADEGHILAAARQETMIHTQQFDESREAYVIEGHALENTSIYSQLKERLLKES.

The 163-residue stretch at 201-363 folds into the Hflx-type G domain; sequence IQLALVGYTN…KIEQALKGMM (163 aa). GTP is bound by residues 207 to 214, 232 to 236, 254 to 257, 320 to 323, and 341 to 343; these read GYTNAGKS, FATLD, DTVG, NKAD, and SAY. Serine 214 and threonine 234 together coordinate Mg(2+).

The protein belongs to the TRAFAC class OBG-HflX-like GTPase superfamily. HflX GTPase family. As to quaternary structure, monomer. Associates with the 50S ribosomal subunit. It depends on Mg(2+) as a cofactor.

It localises to the cytoplasm. Its function is as follows. GTPase that associates with the 50S ribosomal subunit and may have a role during protein synthesis or ribosome biogenesis. The protein is GTPase HflX of Alkalihalophilus pseudofirmus (strain ATCC BAA-2126 / JCM 17055 / OF4) (Bacillus pseudofirmus).